Here is a 280-residue protein sequence, read N- to C-terminus: Hydroxyethylthiazole kinase (280 aa).

A substrate-binding site is contributed by M58. Residue R129 participates in ATP binding. A206 provides a ligand contact to substrate.

Belongs to the Thz kinase family. The cofactor is Mg(2+).

It catalyses the reaction 5-(2-hydroxyethyl)-4-methylthiazole + ATP = 4-methyl-5-(2-phosphooxyethyl)-thiazole + ADP + H(+). It participates in cofactor biosynthesis; thiamine diphosphate biosynthesis; 4-methyl-5-(2-phosphoethyl)-thiazole from 5-(2-hydroxyethyl)-4-methylthiazole: step 1/1. Thiazole kinase involved in thiamine salvage pathway. This chain is Hydroxyethylthiazole kinase (THIM), found in Zea mays (Maize).